The primary structure comprises 278 residues: uncharacterized protein (278 aa).

The N-terminal stretch at 1 to 32 is a signal peptide; it reads MSSASFTTKALSVLAALTAASAPLVAASPAHA. The Peptidase S1 domain maps to 33–236; that stretch reads LANARNVTGS…HAEWIAYYTG (204 aa). Cysteines 59 and 75 form a disulfide. Active-site charge relay system residues include histidine 74, aspartate 123, and serine 189.

Belongs to the peptidase S1 family.

The protein localises to the secreted. This is an uncharacterized protein from Corynebacterium glutamicum (strain R).